A 69-amino-acid chain; its full sequence is Small, acid-soluble spore protein I (69 aa).

Belongs to the SspI family.

It localises to the spore core. This is Small, acid-soluble spore protein I from Bacillus mycoides (strain KBAB4) (Bacillus weihenstephanensis).